The chain runs to 218 residues: Pyridoxal 5'-phosphate synthase subunit PdxT (218 aa).

54–56 (GES) lines the L-glutamine pocket. Cysteine 86 acts as the Nucleophile in catalysis. Residues arginine 120 and 149–150 (IR) contribute to the L-glutamine site. Catalysis depends on charge relay system residues histidine 197 and glutamate 199.

Belongs to the glutaminase PdxT/SNO family. As to quaternary structure, in the presence of PdxS, forms a dodecamer of heterodimers. Only shows activity in the heterodimer.

The catalysed reaction is aldehydo-D-ribose 5-phosphate + D-glyceraldehyde 3-phosphate + L-glutamine = pyridoxal 5'-phosphate + L-glutamate + phosphate + 3 H2O + H(+). It catalyses the reaction L-glutamine + H2O = L-glutamate + NH4(+). Its pathway is cofactor biosynthesis; pyridoxal 5'-phosphate biosynthesis. In terms of biological role, catalyzes the hydrolysis of glutamine to glutamate and ammonia as part of the biosynthesis of pyridoxal 5'-phosphate. The resulting ammonia molecule is channeled to the active site of PdxS. The chain is Pyridoxal 5'-phosphate synthase subunit PdxT from Saccharopolyspora erythraea (strain ATCC 11635 / DSM 40517 / JCM 4748 / NBRC 13426 / NCIMB 8594 / NRRL 2338).